The following is a 642-amino-acid chain: Voltage-gated potassium channel KCNC2 (642 aa).

Residues 1 to 233 (MGKIESNERV…EDPYSSRAAR (233 aa)) lie on the Cytoplasmic side of the membrane. The disordered stretch occupies residues 45-98 (DCLTAAGDKLQPLPPPLSPPPRPPPLSPVPSGCFEGGAGNCSSHGGNGGNGGSD). The segment covering 56–72 (PLPPPLSPPPRPPPLSP) has biased composition (pro residues). Over residues 78–98 (FEGGAGNCSSHGGNGGNGGSD) the composition is skewed to gly residues. Zn(2+) is bound by residues H128, C134, C155, and C156. Residues 234–254 (FIAFASLFFILVSITTFCLET) form a helical membrane-spanning segment. N-linked (GlcNAc...) asparagine glycosylation is found at N263 and N270. The chain crosses the membrane as a helical span at residues 287–307 (TYVEGVCVVWFTFEFLVRIVF). Residues 308–317 (SPNKLEFIKN) lie on the Cytoplasmic side of the membrane. A helical membrane pass occupies residues 318–338 (LLNIIDFVAILPFYLEVGLSG). A helical; Voltage-sensor transmembrane segment spans residues 350–372 (FLRVVRFVRILRIFKLTRHFVGL). Topologically, residues 373 to 385 (RVLGHTLRASTNE) are cytoplasmic. A helical transmembrane segment spans residues 386 to 406 (FLLLIIFLALGVLIFATMIYY). K(+) contacts are provided by T441, L442, G443, and Y444. The Selectivity filter signature appears at 441–446 (TLGYGD). Residues 457-477 (VGALCALAGVLTIAMPVPVIV) form a helical membrane-spanning segment. Residues 478 to 642 (NNFGMYYSLA…RSRSPIPSIL (165 aa)) are Cytoplasmic-facing. The interval 542–576 (SVLSGDDSTGSEPPLSPPERLPIRRSSTRDKNRRG) is disordered. S604 is modified (phosphoserine).

The protein belongs to the potassium channel family. C (Shaw) (TC 1.A.1.2) subfamily. Kv3.2/KCNC2 sub-subfamily. Homotetramer and heterotetramer with other channel-forming alpha subunits, such as KCNC1. Interacts with KCNC1. Homotetramer or heterotetramer channel activity is regulated by association with modulating ancillary subunits such as KCNE1, KCNE2 and KCNE3, creating a functionally diverse range of channel complexes. Interacts with KCNE1, KCNE2 and KCNE3. Post-translationally, phosphorylated by PKA in cortical synaptosomes. cAMP-dependent phosphorylation inhibits channel activity. Histamine H2 receptor- and PKA-induced phosphorylation extends action potential spike duration, reduces action potential spike amplitude, sustains maximum firing frequency in hippocampal interneurons; also reduces the incidence of high-frequency oscillations in hippocampal CA3 pyramidal cell layers. Weakly expressed in the brain at postnatal age day 7 (P7) and increased at P60. Not detectable in newborn hippocampus. Expressed weakly at P7 in the early developing hippocampus, increasing progressively and reaching a plateau of expression at P14 that is maintained throughout P51. Expressed in paravalbumin- and somatostain-containing inhibitory interneurons of the hippocampus; in the CA1/CA3 stratum oriens-alveus and stratum pyramidale and in cells within the hilus and subgranular layer of the dentate gyrus (DG). Strongly expressed in parvalbumin (PV)-containing fast-spiking GABAergic inhibitor interneurons in deep cortical layers V and VI. Also expressed in non-fast-spiking calbindin (CB)- and/or somatostatin (SOM)-containing interneurons in deep cortical layers V and VI. Expressed in starburst amacrine cells of the retina in the inner nuclear layer (INL) and ganglion cell layer (GCL). Expressed in the suprachiasmatic nucleus (SCN) (at protein level). Expressed in the early developing brain, increasing progressively until P14.

It localises to the cell membrane. The protein localises to the membrane. Its subcellular location is the perikaryon. It is found in the cell projection. The protein resides in the axon. It localises to the dendrite. The protein localises to the postsynaptic cell membrane. Its subcellular location is the presynaptic cell membrane. It is found in the synapse. The protein resides in the synaptosome. It localises to the apical cell membrane. The protein localises to the basolateral cell membrane. The catalysed reaction is K(+)(in) = K(+)(out). Its activity is regulated as follows. Inhibited by millimolar levels of tetraethylammonium (TEA). Contrary to other channels, inhibited only by millimolar levels of 4-aminopyridine (4-AP). Inhibited by Stichodactyla helianthus peptide ShK. Voltage-gated potassium channel that mediates transmembrane potassium transport in excitable membranes, primarily in the brain. Contributes to the regulation of the fast action potential repolarization and in sustained high-frequency firing in neurons of the central nervous system. Homotetramer channels mediate delayed-rectifier voltage-dependent potassium currents that activate rapidly at high-threshold voltages and inactivate slowly. Forms tetrameric channels through which potassium ions pass in accordance with their electrochemical gradient. The channel alternates between opened and closed conformations in response to the voltage difference across the membrane. Can form functional homotetrameric and heterotetrameric channels that contain variable proportions of KCNC1, and possibly other family members as well; channel properties depend on the type of alpha subunits that are part of the channel. Channel properties may be modulated by either the association with ancillary subunits, such as KCNE1, KCNE2 and KCNE3 or indirectly by nitric oxide (NO) through a cGMP- and PKG-mediated signaling cascade, slowing channel activation and deactivation of delayed rectifier potassium channels. Contributes to fire sustained trains of very brief action potentials at high frequency in thalamocortical and suprachiasmatic nucleus (SCN) neurons, in hippocampal and neocortical interneurons and in retinal ganglion cells. Sustained maximal action potential firing frequency in inhibitory hippocampal interneurons is negatively modulated by histamine H2 receptor activation in a cAMP- and protein kinase (PKA) phosphorylation-dependent manner. Plays a role in maintaining the fidelity of synaptic transmission in neocortical GABAergic interneurons by generating action potential (AP) repolarization at nerve terminals, thus reducing spike-evoked calcium influx and GABA neurotransmitter release. Required for long-range synchronization of gamma oscillations over distance in the neocortex. Contributes to the modulation of the circadian rhythm of spontaneous action potential firing in suprachiasmatic nucleus (SCN) neurons in a light-dependent manner. The polypeptide is Voltage-gated potassium channel KCNC2 (Mus musculus (Mouse)).